The sequence spans 118 residues: Large ribosomal subunit protein eL18 (118 aa).

This sequence belongs to the eukaryotic ribosomal protein eL18 family.

In Nanoarchaeum equitans (strain Kin4-M), this protein is Large ribosomal subunit protein eL18.